A 122-amino-acid polypeptide reads, in one-letter code: Large ribosomal subunit protein uL14 (122 aa).

The protein belongs to the universal ribosomal protein uL14 family. Part of the 50S ribosomal subunit. Forms a cluster with proteins L3 and L19. In the 70S ribosome, L14 and L19 interact and together make contacts with the 16S rRNA in bridges B5 and B8.

In terms of biological role, binds to 23S rRNA. Forms part of two intersubunit bridges in the 70S ribosome. The polypeptide is Large ribosomal subunit protein uL14 (Chlamydia abortus (strain DSM 27085 / S26/3) (Chlamydophila abortus)).